The sequence spans 252 residues: Chitooligosaccharide deacetylase (252 aa).

Residues His61 and His125 each coordinate Mg(2+).

This sequence belongs to the YdjC deacetylase family. ChbG subfamily. In terms of assembly, homodimer. Mg(2+) is required as a cofactor.

It localises to the cytoplasm. It carries out the reaction N,N'-diacetylchitobiose + H2O = N-acetyl-beta-D-glucosaminyl-(1-&gt;4)-D-glucosamine + acetate. The enzyme catalyses diacetylchitobiose-6'-phosphate + H2O = N'-monoacetylchitobiose-6'-phosphate + acetate. The protein operates within glycan degradation; chitin degradation. Functionally, involved in the degradation of chitin. ChbG is essential for growth on the acetylated chitooligosaccharides chitobiose and chitotriose but is dispensable for growth on cellobiose and chitosan dimer, the deacetylated form of chitobiose. Deacetylation of chitobiose-6-P and chitotriose-6-P is necessary for both the activation of the chb promoter by the regulatory protein ChbR and the hydrolysis of phosphorylated beta-glucosides by the phospho-beta-glucosidase ChbF. Catalyzes the removal of only one acetyl group from chitobiose-6-P to yield monoacetylchitobiose-6-P, the inducer of ChbR and the substrate of ChbF. The protein is Chitooligosaccharide deacetylase of Salmonella heidelberg (strain SL476).